The following is a 150-amino-acid chain: Large ribosomal subunit protein uL13 (150 aa).

This sequence belongs to the universal ribosomal protein uL13 family. In terms of assembly, part of the 50S ribosomal subunit.

Its function is as follows. This protein is one of the early assembly proteins of the 50S ribosomal subunit, although it is not seen to bind rRNA by itself. It is important during the early stages of 50S assembly. The protein is Large ribosomal subunit protein uL13 of Chlamydia trachomatis serovar A (strain ATCC VR-571B / DSM 19440 / HAR-13).